The following is a 571-amino-acid chain: MSFKMTQNQYTSLYGPTVGDSIRLGDTNLFAQIEKDYAVYGEEATFGGGKSIRDGMAQNPRVTRDDVNVADLVISNAVIIDYDKVVKADIGIKNGYIFAIGNAGNPDIMDNVDIIIGSTTDIIAAEGKIVTAGGIDTHVHFINPEQAEVALESGITTHIGGGTGASEGSKATTVTPGPWHIHRMLEAAEGLPINVGFTGKGQATNPTALIEQINAGAIGLKVHEDWGATPSALSHALDVADEFDVQIALHADTLNEAGFMEDTMAAVKDRVLHMYHTEGAGGGHAPDLIKSAAFSNILPSSTNPTLPYTHNTVDEHLDMVMITHHLNAAIPEDIAFADSRIRKETIAAEDVLQDMGVFSMISSDSQAMGRVGEVITRTWQVAHRMKEQRGPLDGDFEHNDNNRIKRYIAKYTINPAITHGISEYVGSIEPGKLADIVLWDPIFFGVKPELVVKGGLINSAVNGDANGSIPTSEPMKYRKMYGQYGGNLTSTSMTFVSKTAYENGINRALNLKRMVRPVKNIRQLSKADMKNNSATPKLDVDPQTYEVYVDGEKITSNAATELPLTQRYFLF.

A Urease domain is found at 133-571 (GGIDTHVHFI…LPLTQRYFLF (439 aa)). Ni(2+) contacts are provided by histidine 138, histidine 140, and lysine 221. Position 221 is an N6-carboxylysine (lysine 221). Substrate is bound at residue histidine 223. The Ni(2+) site is built by histidine 250 and histidine 276. The active-site Proton donor is the histidine 324. Aspartate 364 lines the Ni(2+) pocket.

The protein belongs to the metallo-dependent hydrolases superfamily. Urease alpha subunit family. Heterotrimer of UreA (gamma), UreB (beta) and UreC (alpha) subunits. Three heterotrimers associate to form the active enzyme. Ni cation serves as cofactor. Carboxylation allows a single lysine to coordinate two nickel ions.

Its subcellular location is the cytoplasm. It catalyses the reaction urea + 2 H2O + H(+) = hydrogencarbonate + 2 NH4(+). It functions in the pathway nitrogen metabolism; urea degradation; CO(2) and NH(3) from urea (urease route): step 1/1. This Staphylococcus aureus (strain USA300) protein is Urease subunit alpha.